A 410-amino-acid chain; its full sequence is Multifunctional CCA protein (410 aa).

2 residues coordinate ATP: glycine 8 and arginine 11. 2 residues coordinate CTP: glycine 8 and arginine 11. Positions 21 and 23 each coordinate Mg(2+). Residues arginine 91, arginine 138, and arginine 141 each coordinate ATP. CTP contacts are provided by arginine 91, arginine 138, and arginine 141. One can recognise an HD domain in the interval 229 to 347; sequence TGVHQEMVSD…AQLALVCEAD (119 aa).

It belongs to the tRNA nucleotidyltransferase/poly(A) polymerase family. Bacterial CCA-adding enzyme type 1 subfamily. In terms of assembly, monomer. Can also form homodimers and oligomers. The cofactor is Mg(2+). Requires Ni(2+) as cofactor.

It catalyses the reaction a tRNA precursor + 2 CTP + ATP = a tRNA with a 3' CCA end + 3 diphosphate. The catalysed reaction is a tRNA with a 3' CCA end + 2 CTP + ATP = a tRNA with a 3' CCACCA end + 3 diphosphate. Functionally, catalyzes the addition and repair of the essential 3'-terminal CCA sequence in tRNAs without using a nucleic acid template. Adds these three nucleotides in the order of C, C, and A to the tRNA nucleotide-73, using CTP and ATP as substrates and producing inorganic pyrophosphate. tRNA 3'-terminal CCA addition is required both for tRNA processing and repair. Also involved in tRNA surveillance by mediating tandem CCA addition to generate a CCACCA at the 3' terminus of unstable tRNAs. While stable tRNAs receive only 3'-terminal CCA, unstable tRNAs are marked with CCACCA and rapidly degraded. The sequence is that of Multifunctional CCA protein from Xanthomonas campestris pv. campestris (strain B100).